The primary structure comprises 69 residues: Conotoxin Eb6.20 (69 aa).

The first 17 residues, 1-17 (VLIIAVLFLTACQLTTA), serve as a signal peptide directing secretion. The propeptide occupies 18–41 (ETYSRGRQKHRARRSTDKNSKWTR). 3 disulfide bridges follow: Cys43-Cys57, Cys50-Cys61, and Cys56-Cys68.

It belongs to the conotoxin O1 superfamily. In terms of tissue distribution, expressed by the venom duct.

The protein resides in the secreted. This is Conotoxin Eb6.20 (E1) from Conus ebraeus (Hebrew cone).